We begin with the raw amino-acid sequence, 213 residues long: Pyridoxine/pyridoxamine 5'-phosphate oxidase 2 (213 aa).

Residues 9–12 (RQRY) and K67 contribute to the substrate site. FMN-binding positions include 62-67 (RTVLLK), 77-78 (FT), K84, and Q106. 3 residues coordinate substrate: Y124, R128, and S132. FMN contacts are provided by residues 141–142 (QS) and W186. A substrate-binding site is contributed by 192–194 (RLH). R196 provides a ligand contact to FMN.

This sequence belongs to the pyridoxamine 5'-phosphate oxidase family. In terms of assembly, homodimer. The cofactor is FMN.

It carries out the reaction pyridoxamine 5'-phosphate + O2 + H2O = pyridoxal 5'-phosphate + H2O2 + NH4(+). It catalyses the reaction pyridoxine 5'-phosphate + O2 = pyridoxal 5'-phosphate + H2O2. It participates in cofactor metabolism; pyridoxal 5'-phosphate salvage; pyridoxal 5'-phosphate from pyridoxamine 5'-phosphate: step 1/1. It functions in the pathway cofactor metabolism; pyridoxal 5'-phosphate salvage; pyridoxal 5'-phosphate from pyridoxine 5'-phosphate: step 1/1. Catalyzes the oxidation of either pyridoxine 5'-phosphate (PNP) or pyridoxamine 5'-phosphate (PMP) into pyridoxal 5'-phosphate (PLP). The polypeptide is Pyridoxine/pyridoxamine 5'-phosphate oxidase 2 (Hydrogenovibrio crunogenus (strain DSM 25203 / XCL-2) (Thiomicrospira crunogena)).